A 305-amino-acid chain; its full sequence is Homoserine O-acetyltransferase (305 aa).

Cysteine 142 (acyl-thioester intermediate) is an active-site residue. Substrate contacts are provided by lysine 163 and serine 192. Histidine 235 functions as the Proton acceptor in the catalytic mechanism. Residue glutamate 237 is part of the active site. A substrate-binding site is contributed by arginine 249.

The protein belongs to the MetA family.

The protein resides in the cytoplasm. It catalyses the reaction L-homoserine + acetyl-CoA = O-acetyl-L-homoserine + CoA. Its pathway is amino-acid biosynthesis; L-methionine biosynthesis via de novo pathway; O-acetyl-L-homoserine from L-homoserine: step 1/1. Transfers an acetyl group from acetyl-CoA to L-homoserine, forming acetyl-L-homoserine. The polypeptide is Homoserine O-acetyltransferase (Phocaeicola vulgatus (strain ATCC 8482 / DSM 1447 / JCM 5826 / CCUG 4940 / NBRC 14291 / NCTC 11154) (Bacteroides vulgatus)).